A 396-amino-acid chain; its full sequence is MITLFRKPFVAGLAISLLVGGGIGNVAAAQGGPPKSGVFGENEKRNDQPFAWQVASLSERYQEQFDIGAAVEPYQLEGRQAQILKHHYNSLVAENAMKPESLQPREGEWNWEGADKIVEFARKHNMELRFHTLVWHSQVPEWFFIDEDGNRMVDETDPDKREANKQLLLERMENHIKTVVERYKDDVTSWDVVNEVIDDGGGLRESEWYQITGTDYIKVAFETARKYGGEEAKLYINDYNTEVPSKRDDLYNLVKDLLEQGVPIDGVGHQSHIQIGWPSIEDTRASFEKFTSLGLDNQVTELDMSLYGWPPTGAYTSYDDIPAELLQAQADRYDQLFELYEELAADISSVTFWGIADNHTWLDGRAREYNNGVGIDAPFVFDHNYRVKPAYWRIID.

Residues 1 to 28 form the signal peptide; it reads MITLFRKPFVAGLAISLLVGGGIGNVAA. Residues 51–396 enclose the GH10 domain; that stretch reads AWQVASLSER…VKPAYWRIID (346 aa). The active-site Proton donor is glutamate 195. The active-site Nucleophile is glutamate 301.

It belongs to the glycosyl hydrolase 10 (cellulase F) family.

The protein resides in the secreted. The catalysed reaction is Endohydrolysis of (1-&gt;4)-beta-D-xylosidic linkages in xylans.. It functions in the pathway glycan degradation; xylan degradation. The sequence is that of Endo-1,4-beta-xylanase A (xynA) from Halalkalibacterium halodurans (strain ATCC BAA-125 / DSM 18197 / FERM 7344 / JCM 9153 / C-125) (Bacillus halodurans).